The sequence spans 381 residues: Choline transport ATP-binding protein OpuBA (381 aa).

The ABC transporter domain maps to 2–236; it reads LTLENVSKTY…PADEFVEEFI (235 aa). Residue 35 to 42 coordinates ATP; it reads GPSGCGKT. 2 consecutive CBS domains span residues 256-314 and 316-374; these read MNTQ…LVSE and LHED…WGEE.

This sequence belongs to the ABC transporter superfamily.

Functionally, involved in a high affinity multicomponent binding-protein-dependent transport system for choline. Probably responsible for energy coupling to the transport system. The protein is Choline transport ATP-binding protein OpuBA (opuBA) of Bacillus subtilis (strain 168).